Here is a 348-residue protein sequence, read N- to C-terminus: Dihydroorotase (348 aa).

Residues His17 and His19 each coordinate Zn(2+). Residues 19-21 (HLR) and Asn45 each bind substrate. Zn(2+) contacts are provided by Lys103, His140, and His178. An N6-carboxylysine modification is found at Lys103. His140 contacts substrate. Leu223 is a binding site for substrate. Residue Asp251 coordinates Zn(2+). Residue Asp251 is part of the active site. Residues His255 and Ala267 each coordinate substrate.

This sequence belongs to the metallo-dependent hydrolases superfamily. DHOase family. Class II DHOase subfamily. Homodimer. Requires Zn(2+) as cofactor.

It catalyses the reaction (S)-dihydroorotate + H2O = N-carbamoyl-L-aspartate + H(+). Its pathway is pyrimidine metabolism; UMP biosynthesis via de novo pathway; (S)-dihydroorotate from bicarbonate: step 3/3. Its function is as follows. Catalyzes the reversible cyclization of carbamoyl aspartate to dihydroorotate. The polypeptide is Dihydroorotase (Salmonella dublin (strain CT_02021853)).